A 634-amino-acid polypeptide reads, in one-letter code: Fluorothreonine transaldolase (634 aa).

Residues tyrosine 67, histidine 221, and histidine 247 each coordinate pyridoxal 5'-phosphate. Position 248 is an N6-(pyridoxal phosphate)lysine (lysine 248). Arginine 375 contacts pyridoxal 5'-phosphate. Residues 428 to 456 (TGDPASAAGPPARERYAPPTAPAGHPARP) are disordered.

Belongs to the SHMT family. It depends on pyridoxal 5'-phosphate as a cofactor.

It carries out the reaction fluoroacetaldehyde + L-threonine = 4-fluoro-L-threonine + acetaldehyde. In terms of biological role, transaldolase that catalyzes the final step in 4-fluorothreonine biosynthesis. Mediates a L-threonine/fluoroaceldehyde to 4-fluoro-L-threonine/acetaldehyde crossover reaction. Can also convert chloroacetaldehyde into 4-chloro-L-threonine. Does not use glycine as a substrate. This Streptantibioticus cattleyicolor (Streptomyces cattleya) protein is Fluorothreonine transaldolase.